The chain runs to 574 residues: Glycine--tRNA ligase (574 aa).

The substrate site is built by arginine 96 and glutamate 162. ATP-binding positions include arginine 194–glutamate 196, isoleucine 204–phenylalanine 209, glutamate 327–cysteine 328, and glycine 450–arginine 453. Substrate is bound at residue phenylalanine 209–glutamate 213. Residue glutamate 446 to glycine 450 participates in substrate binding.

Belongs to the class-II aminoacyl-tRNA synthetase family.

The protein resides in the cytoplasm. The enzyme catalyses tRNA(Gly) + glycine + ATP = glycyl-tRNA(Gly) + AMP + diphosphate. Functionally, catalyzes the attachment of glycine to tRNA(Gly). The protein is Glycine--tRNA ligase of Methanococcus maripaludis (strain C7 / ATCC BAA-1331).